The following is a 106-amino-acid chain: Transcriptional and immune response regulator (106 aa).

Monomer. Interacts with NOTCH2 (via ANK repeats), the interaction inhibits the nuclear translocation of NOTCH2 N2ICD. Interacts (C-terminus) with CBY1 (C-terminus), TCIM competes with CTNNB1 for the interaction with CBY1.

It is found in the cytoplasm. It localises to the nucleus. The protein resides in the nucleolus. Its subcellular location is the nucleus speckle. Its function is as follows. Seems to be involved in the regulation of cell growth an differentiation, may play different and opposite roles depending on the tissue or cell type. May enhance the WNT-CTNNB1 pathway by relieving antagonistic activity of CBY1. Enhances the proliferation of follicular dendritic cells. Plays a role in the mitogen-activated MAPK2/3 signaling pathway, positively regulates G1-to-S-phase transition of the cell cycle. In endothelial cells, enhances key inflammatory mediators and inflammatory response through the modulation of NF-kappaB transcriptional regulatory activity. Involved in the regulation of heat shock response, seems to play a positive feedback with HSF1 to modulate heat-shock downstream gene expression. Plays a role in the regulation of hematopoiesis even if the mechanisms are unknown. In cancers such as thyroid or lung cancer, it has been described as promoter of cell proliferation, G1-to-S-phase transition and inhibitor of apoptosis. However, it negatively regulates self-renewal of liver cancer cells via suppresion of NOTCH2 signaling. This is Transcriptional and immune response regulator (TCIM) from Bos taurus (Bovine).